Here is a 423-residue protein sequence, read N- to C-terminus: Flavohemoprotein B (423 aa).

Residues 1–136 (MLSQKSIQII…VAQAFMDAEE (136 aa)) form the Globin domain. His83 is a heme b binding site. Catalysis depends on charge relay system residues Tyr93 and Glu135. The tract at residues 149–423 (WKDTREFVVD…LRGVKNIIEN (275 aa)) is reductase. Residues 150–268 (KDTREFVVDR…SVPAGDFVVN (119 aa)) enclose the FAD-binding FR-type domain. FAD is bound by residues Tyr188 and 212-215 (RHYS). An NADP(+)-binding site is contributed by 281–286 (GVGINP). 400-403 (LFGP) lines the FAD pocket.

The protein belongs to the globin family. Two-domain flavohemoproteins subfamily. It in the C-terminal section; belongs to the flavoprotein pyridine nucleotide cytochrome reductase family. FAD is required as a cofactor. The cofactor is heme b.

Its subcellular location is the cytoplasm. It carries out the reaction 2 nitric oxide + NADPH + 2 O2 = 2 nitrate + NADP(+) + H(+). The enzyme catalyses 2 nitric oxide + NADH + 2 O2 = 2 nitrate + NAD(+) + H(+). Its function is as follows. Is involved in NO detoxification in an aerobic process, termed nitric oxide dioxygenase (NOD) reaction that utilizes O(2) and NAD(P)H to convert NO to nitrate, which protects the cell from various noxious nitrogen compounds. Therefore, plays a central role in the inducible response to nitrosative stress. Functionally, in the presence of oxygen and NADH, it has NADH oxidase activity, which leads to the generation of superoxide and H(2)O(2). Under anaerobic conditions, it also exhibits nitric oxide reductase and FAD reductase activities. However, all these reactions are much lower than NOD activity. The chain is Flavohemoprotein B (fhbB) from Dictyostelium discoideum (Social amoeba).